We begin with the raw amino-acid sequence, 445 residues long: C4-dicarboxylate transport protein (445 aa).

Helical transmembrane passes span 24-44 (VLYV…WLSP), 62-82 (LIKM…IAHI), 105-125 (FALV…GLAA), 163-183 (GDIL…MALG), 201-221 (FGVI…AMAF), 234-254 (LIGL…LVLG), 322-342 (IYMT…LSFG), and 370-390 (AGTL…VFSI).

It belongs to the dicarboxylate/amino acid:cation symporter (DAACS) (TC 2.A.23) family.

Its subcellular location is the cell inner membrane. Functionally, responsible for the transport of dicarboxylates such as succinate, fumarate, and malate from the periplasm across the membrane. In Rhodopseudomonas palustris (strain ATCC BAA-98 / CGA009), this protein is C4-dicarboxylate transport protein.